Reading from the N-terminus, the 331-residue chain is D-alanine--D-alanine ligase (331 aa).

An ATP-grasp domain is found at 112–314 (KRIWRSEGLP…YEDLCLRLLA (203 aa)). 138-193 (LQTLGAPMIVKPAREGSTIGLSKVHQAQQCASAYLLAARYDPEVLCEQFIAGDELT) serves as a coordination point for ATP. Mg(2+)-binding residues include Asp267, Glu281, and Asn283.

The protein belongs to the D-alanine--D-alanine ligase family. Mg(2+) is required as a cofactor. It depends on Mn(2+) as a cofactor.

It localises to the cytoplasm. The catalysed reaction is 2 D-alanine + ATP = D-alanyl-D-alanine + ADP + phosphate + H(+). The protein operates within cell wall biogenesis; peptidoglycan biosynthesis. In terms of biological role, cell wall formation. The sequence is that of D-alanine--D-alanine ligase from Verminephrobacter eiseniae (strain EF01-2).